The following is a 240-amino-acid chain: Uridylate kinase (240 aa).

Position 13-16 (13-16 (KASG)) interacts with ATP. The segment at 21-26 (GSQGFG) is involved in allosteric activation by GTP. G55 serves as a coordination point for UMP. ATP contacts are provided by G56 and R60. Residues D75 and 136-143 (TGNPFFTT) contribute to the UMP site. Positions 163, 164, 169, and 172 each coordinate ATP.

It belongs to the UMP kinase family. Homohexamer.

It is found in the cytoplasm. The catalysed reaction is UMP + ATP = UDP + ADP. It functions in the pathway pyrimidine metabolism; CTP biosynthesis via de novo pathway; UDP from UMP (UMPK route): step 1/1. With respect to regulation, allosterically activated by GTP. Inhibited by UTP. Its function is as follows. Catalyzes the reversible phosphorylation of UMP to UDP. In Rhizobium meliloti (strain 1021) (Ensifer meliloti), this protein is Uridylate kinase.